The following is a 110-amino-acid chain: Nucleoid-associated protein Mkms_4993 (110 aa).

The protein belongs to the YbaB/EbfC family. Homodimer.

It is found in the cytoplasm. Its subcellular location is the nucleoid. Its function is as follows. Binds to DNA and alters its conformation. May be involved in regulation of gene expression, nucleoid organization and DNA protection. The protein is Nucleoid-associated protein Mkms_4993 of Mycobacterium sp. (strain KMS).